Here is a 643-residue protein sequence, read N- to C-terminus: tRNA 5-methylaminomethyl-2-thiouridine biosynthesis bifunctional protein MnmC (643 aa).

The tRNA (mnm(5)s(2)U34)-methyltransferase stretch occupies residues 1–223; sequence MPDRLVSATL…VDDRLVGDYA (223 aa). The segment at 247–643 is FAD-dependent cmnm(5)s(2)U34 oxidoreductase; that stretch reads IGAGLAGCAV…LRARRVGSAG (397 aa).

This sequence in the N-terminal section; belongs to the methyltransferase superfamily. tRNA (mnm(5)s(2)U34)-methyltransferase family. It in the C-terminal section; belongs to the DAO family. It depends on FAD as a cofactor.

It is found in the cytoplasm. It carries out the reaction 5-aminomethyl-2-thiouridine(34) in tRNA + S-adenosyl-L-methionine = 5-methylaminomethyl-2-thiouridine(34) in tRNA + S-adenosyl-L-homocysteine + H(+). Functionally, catalyzes the last two steps in the biosynthesis of 5-methylaminomethyl-2-thiouridine (mnm(5)s(2)U) at the wobble position (U34) in tRNA. Catalyzes the FAD-dependent demodification of cmnm(5)s(2)U34 to nm(5)s(2)U34, followed by the transfer of a methyl group from S-adenosyl-L-methionine to nm(5)s(2)U34, to form mnm(5)s(2)U34. This chain is tRNA 5-methylaminomethyl-2-thiouridine biosynthesis bifunctional protein MnmC, found in Burkholderia orbicola (strain AU 1054).